A 365-amino-acid chain; its full sequence is Phosphoserine aminotransferase (365 aa).

Arginine 40 lines the L-glutamate pocket. Residues 74 to 75, phenylalanine 99, threonine 155, aspartate 177, and glutamine 200 each bind pyridoxal 5'-phosphate; that span reads AS. Residue lysine 201 is modified to N6-(pyridoxal phosphate)lysine. 241–242 serves as a coordination point for pyridoxal 5'-phosphate; sequence NT.

Belongs to the class-V pyridoxal-phosphate-dependent aminotransferase family. SerC subfamily. In terms of assembly, homodimer. The cofactor is pyridoxal 5'-phosphate.

The protein localises to the cytoplasm. It catalyses the reaction O-phospho-L-serine + 2-oxoglutarate = 3-phosphooxypyruvate + L-glutamate. It carries out the reaction 4-(phosphooxy)-L-threonine + 2-oxoglutarate = (R)-3-hydroxy-2-oxo-4-phosphooxybutanoate + L-glutamate. It participates in amino-acid biosynthesis; L-serine biosynthesis; L-serine from 3-phospho-D-glycerate: step 2/3. In terms of biological role, catalyzes the reversible conversion of 3-phosphohydroxypyruvate to phosphoserine and of 3-hydroxy-2-oxo-4-phosphonooxybutanoate to phosphohydroxythreonine. This is Phosphoserine aminotransferase from Lactococcus lactis subsp. cremoris (strain MG1363).